Consider the following 131-residue polypeptide: D-ribose pyranase (131 aa).

Catalysis depends on H20, which acts as the Proton donor. Residues D28, H98, and Y120–N122 each bind substrate.

The protein belongs to the RbsD / FucU family. RbsD subfamily. In terms of assembly, homodecamer.

Its subcellular location is the cytoplasm. It catalyses the reaction beta-D-ribopyranose = beta-D-ribofuranose. It functions in the pathway carbohydrate metabolism; D-ribose degradation; D-ribose 5-phosphate from beta-D-ribopyranose: step 1/2. Functionally, catalyzes the interconversion of beta-pyran and beta-furan forms of D-ribose. The protein is D-ribose pyranase of Bacillus cereus (strain G9842).